A 145-amino-acid chain; its full sequence is 3-dehydroquinate dehydratase (145 aa).

Tyrosine 24 acts as the Proton acceptor in catalysis. The substrate site is built by asparagine 75, histidine 81, and aspartate 88. Residue histidine 101 is the Proton donor of the active site. Substrate-binding positions include 102–103 and arginine 112; that span reads IS.

Belongs to the type-II 3-dehydroquinase family. As to quaternary structure, homododecamer.

The enzyme catalyses 3-dehydroquinate = 3-dehydroshikimate + H2O. It participates in metabolic intermediate biosynthesis; chorismate biosynthesis; chorismate from D-erythrose 4-phosphate and phosphoenolpyruvate: step 3/7. Its function is as follows. Catalyzes a trans-dehydration via an enolate intermediate. The chain is 3-dehydroquinate dehydratase from Rhizobium johnstonii (strain DSM 114642 / LMG 32736 / 3841) (Rhizobium leguminosarum bv. viciae).